The following is a 381-amino-acid chain: Actin-binding Rho-activating protein (381 aa).

Disordered regions lie at residues 39 to 156 (ENSI…SHGS) and 179 to 207 (QEEP…PEQD). The segment covering 69–79 (PTSHQKAQSAP) has biased composition (polar residues). Over residues 97 to 110 (KAPEVSHIKKKEVS) the composition is skewed to basic and acidic residues. Phosphoserine occurs at positions 156 and 188. A compositionally biased stretch (basic and acidic residues) spans 179–188 (QEEPTWRSDS). 2 actin-binding regions span residues 199-299 (EAEE…AERA) and 300-381 (KRAE…TLLK). Interaction with actin stretches follow at residues 240 to 285 (SPVG…GDEG) and 352 to 381 (MRAR…TLLK).

As to quaternary structure, binds F-actin and ABLIM1, ABLIM2 and ABLIM3. Interaction with ABLIM2 and ABLIM3 enhances activity.

It is found in the cytoplasm. Its subcellular location is the myofibril. The protein localises to the sarcomere. The protein resides in the cytoskeleton. Its function is as follows. Acts as an activator of serum response factor (SRF)-dependent transcription possibly by inducing nuclear translocation of MKL1 or MKL2 and through a mechanism requiring Rho-actin signaling. The chain is Actin-binding Rho-activating protein from Homo sapiens (Human).